A 458-amino-acid chain; its full sequence is Dihydrolipoyl dehydrogenase (458 aa).

Residues 30–38, Lys47, and Ala112 contribute to the FAD site; that span reads DKGKLGGTC. A disulfide bridge links Cys38 with Cys43. NAD(+) is bound by residues 177 to 181, Glu200, and 263 to 266; these read GGGVI and AIGR. Positions 305 and 313 each coordinate FAD. His437 serves as the catalytic Proton acceptor.

This sequence belongs to the class-I pyridine nucleotide-disulfide oxidoreductase family. Homodimer. FAD serves as cofactor.

The protein localises to the cytoplasm. It carries out the reaction N(6)-[(R)-dihydrolipoyl]-L-lysyl-[protein] + NAD(+) = N(6)-[(R)-lipoyl]-L-lysyl-[protein] + NADH + H(+). It functions in the pathway ketone degradation; acetoin degradation. In Bacillus subtilis (strain 168), this protein is Dihydrolipoyl dehydrogenase (acoL).